Reading from the N-terminus, the 272-residue chain is Glutamate 5-kinase (272 aa).

ATP is bound at residue Lys-14. Residues Ser-54, Asp-141, and Asn-157 each contribute to the substrate site. ATP-binding positions include 177–178 and 219–225; these read SD and TGGMLSK.

This sequence belongs to the glutamate 5-kinase family.

It localises to the cytoplasm. The enzyme catalyses L-glutamate + ATP = L-glutamyl 5-phosphate + ADP. It functions in the pathway amino-acid biosynthesis; L-proline biosynthesis; L-glutamate 5-semialdehyde from L-glutamate: step 1/2. Catalyzes the transfer of a phosphate group to glutamate to form L-glutamate 5-phosphate. In Streptococcus pyogenes serotype M28 (strain MGAS6180), this protein is Glutamate 5-kinase.